A 409-amino-acid chain; its full sequence is 3-dehydro-bile acid delta(4,6)-reductase (409 aa).

Residues Ser-12, Glu-33, Val-131, Glu-378, Asn-390, and Leu-391 each coordinate FAD.

It belongs to the BaiN/RdsA family. BaiN subfamily. The cofactor is FAD.

It catalyses the reaction 3-oxocholan-24-oyl-CoA + NAD(+) = 3-oxochol-4-en-24-oyl-CoA + NADH + H(+). It carries out the reaction 3-oxochol-4-en-24-oyl-CoA + NAD(+) = 3-oxochol-4,6-dien-24-oyl-CoA + NADH + H(+). The enzyme catalyses 12alpha-hydroxy-3-oxocholan-24-oyl-CoA + NAD(+) = 12alpha-hydroxy-3-oxochol-4-en-24-oyl-CoA + NADH + H(+). The catalysed reaction is 12alpha-hydroxy-3-oxochol-4-en-24-oyl-CoA + NAD(+) = 12alpha-hydroxy-3-oxochola-4,6-dien-24-oyl-CoA + NADH + H(+). Its pathway is lipid metabolism; bile acid degradation. Functionally, involved in the secondary bile acid metabolism. Catalyzes two subsequent reductions of the double bonds within the bile acid A/B rings of 3-oxochol-4,6-dien-24-oyl-CoA and 12alpha-hydroxy-3-oxochol-4,6-dien-24-oyl-CoA to yield 3-oxocholan-24-oyl-CoA and 12alpha-hydroxy-3-oxocholan-24-oyl-CoA, respectively. This is 3-dehydro-bile acid delta(4,6)-reductase from Clostridium scindens (strain ATCC 35704 / DSM 5676 / VPI 13733 / 19).